We begin with the raw amino-acid sequence, 431 residues long: UDP-N-acetylmuramate--L-alanine ligase (431 aa).

108–114 serves as a coordination point for ATP; the sequence is GAHGKST.

This sequence belongs to the MurCDEF family.

The protein resides in the cytoplasm. It carries out the reaction UDP-N-acetyl-alpha-D-muramate + L-alanine + ATP = UDP-N-acetyl-alpha-D-muramoyl-L-alanine + ADP + phosphate + H(+). Its pathway is cell wall biogenesis; peptidoglycan biosynthesis. Cell wall formation. The protein is UDP-N-acetylmuramate--L-alanine ligase of Campylobacter jejuni subsp. jejuni serotype O:6 (strain 81116 / NCTC 11828).